The chain runs to 525 residues: GMP synthase [glutamine-hydrolyzing] (525 aa).

The region spanning 9 to 207 (RILILDFGSQ…VHEICGCPAD (199 aa)) is the Glutamine amidotransferase type-1 domain. The active-site Nucleophile is Cys-86. Catalysis depends on residues His-181 and Glu-183. The region spanning 208-400 (WTPGNIVDDL…LGLPADMVYR (193 aa)) is the GMPS ATP-PPase domain. 235-241 (SGGVDSS) is an ATP binding site.

In terms of assembly, homodimer.

The catalysed reaction is XMP + L-glutamine + ATP + H2O = GMP + L-glutamate + AMP + diphosphate + 2 H(+). It functions in the pathway purine metabolism; GMP biosynthesis; GMP from XMP (L-Gln route): step 1/1. In terms of biological role, catalyzes the synthesis of GMP from XMP. This is GMP synthase [glutamine-hydrolyzing] from Alkalilimnicola ehrlichii (strain ATCC BAA-1101 / DSM 17681 / MLHE-1).